Here is a 231-residue protein sequence, read N- to C-terminus: MKITWLGHAAFLLEGSMKVLIDPFLTGNPNAPVKPEEVKADYILVTHGHGDHLGDAVEIAKRNNAPIICIHELSRILSRYDVETMGMNMGGTARTGSIAVTMVPAWHSADLEDEQGNIISAGLPAGFIVSMDGVRVYHTGDTDVFLDMQLIGELHRPDVMLLPIGDYYTMGIAGAVKALELVKPKVAIPMHYNTFPLVEKDPEDFRKAVKAKGLDVEVVILKPGESYEFNK.

Belongs to the UPF0173 family.

The chain is UPF0173 metal-dependent hydrolase AF_1265 from Archaeoglobus fulgidus (strain ATCC 49558 / DSM 4304 / JCM 9628 / NBRC 100126 / VC-16).